A 974-amino-acid polypeptide reads, in one-letter code: Coiled-coil domain-containing protein 146 (974 aa).

The segment at 1 to 44 is disordered; it reads MEDRSKYIAEESEDEEDEEQEEKEKKGGASTSTETEEDQEDIPS. Residues 10–21 are compositionally biased toward acidic residues; the sequence is EESEDEEDEEQE. At Ser12 the chain carries Phosphoserine. 6 coiled-coil regions span residues 105–160, 195–340, 421–474, 512–660, 687–712, and 767–848; these read VQLL…QERE, KLLK…TKEN, LPEQ…REVL, KKLE…NESG, QDIEIHILEEKIRFLKLKVAEKQRQI, and LTEE…ELSM.

Interacts with CCDC38 and CCDC42. Interacts with intraflagellar transport proteins IFT20 and IFT88.

Its subcellular location is the cytoplasm. The protein localises to the cytoskeleton. It localises to the microtubule organizing center. The protein resides in the centrosome. It is found in the centriole. Its subcellular location is the cell projection. The protein localises to the cilium. It localises to the flagellum. The protein resides in the flagellum axoneme. It is found in the cilium basal body. Its subcellular location is the midbody. In terms of biological role, essential for sperm flagellum biogenesis and male fertility. This is Coiled-coil domain-containing protein 146 (Ccdc146) from Rattus norvegicus (Rat).